We begin with the raw amino-acid sequence, 104 residues long: MSSVFEIVNQARRKNKLKRELLDNEKKVRDNRKRVDLLDNLLDYIKPEMTHDEILGIIKNMKADYEDRVDDHIIKSAEISKARRDISRRIRELTEEDKQTQGKK.

2 coiled-coil regions span residues isoleucine 7–arginine 34 and serine 76–glutamate 96.

It belongs to the pole-localizer TmaR family.

The protein resides in the cytoplasm. Functionally, pole-localizer protein involved in the regulation of several cellular processes. The chain is Pole-localizer protein TmaR from Vibrio atlanticus (strain LGP32) (Vibrio splendidus (strain Mel32)).